The chain runs to 193 residues: Outer membrane lipoprotein DolP (193 aa).

Positions 1–21 (MTLSPLKKLAILLGATIFLQG) are cleaved as a signal peptide. Cys22 is lipidated: N-palmitoyl cysteine. The S-diacylglycerol cysteine moiety is linked to residue Cys22. BON domains follow at residues 48–117 (DDET…TVSP) and 126–193 (KDSW…KYLD).

The protein belongs to the lipoprotein DolP family.

It localises to the cell outer membrane. Functionally, plays an important role in maintaining outer membrane integrity. This chain is Outer membrane lipoprotein DolP, found in Haemophilus influenzae (strain ATCC 51907 / DSM 11121 / KW20 / Rd).